Reading from the N-terminus, the 49-residue chain is Glutathione peroxidase (49 aa).

Belongs to the glutathione peroxidase family.

The catalysed reaction is 2 glutathione + H2O2 = glutathione disulfide + 2 H2O. With respect to regulation, inhibited by Cu(2+), SDS and DTT. Activity is slightly increased by Fe(2+), Mn(2+), triton X-100 and EDTA. Functionally, glutathione peroxidase which may protect the cell from oxidative damage. This is Glutathione peroxidase from Lactiplantibacillus plantarum (Lactobacillus plantarum).